Reading from the N-terminus, the 210-residue chain is ATP-dependent Clp protease proteolytic subunit (210 aa).

Catalysis depends on S106, which acts as the Nucleophile. H131 is an active-site residue.

This sequence belongs to the peptidase S14 family. Fourteen ClpP subunits assemble into 2 heptameric rings which stack back to back to give a disk-like structure with a central cavity, resembling the structure of eukaryotic proteasomes.

The protein localises to the cytoplasm. The catalysed reaction is Hydrolysis of proteins to small peptides in the presence of ATP and magnesium. alpha-casein is the usual test substrate. In the absence of ATP, only oligopeptides shorter than five residues are hydrolyzed (such as succinyl-Leu-Tyr-|-NHMec, and Leu-Tyr-Leu-|-Tyr-Trp, in which cleavage of the -Tyr-|-Leu- and -Tyr-|-Trp bonds also occurs).. In terms of biological role, cleaves peptides in various proteins in a process that requires ATP hydrolysis. Has a chymotrypsin-like activity. Plays a major role in the degradation of misfolded proteins. In Bartonella quintana (strain Toulouse) (Rochalimaea quintana), this protein is ATP-dependent Clp protease proteolytic subunit.